The following is a 177-amino-acid chain: Large ribosomal subunit protein uL6 (177 aa).

This sequence belongs to the universal ribosomal protein uL6 family. As to quaternary structure, part of the 50S ribosomal subunit.

This protein binds to the 23S rRNA, and is important in its secondary structure. It is located near the subunit interface in the base of the L7/L12 stalk, and near the tRNA binding site of the peptidyltransferase center. The protein is Large ribosomal subunit protein uL6 of Rhizobium etli (strain CIAT 652).